Reading from the N-terminus, the 158-residue chain is Large ribosomal subunit protein uL11 (158 aa).

Belongs to the universal ribosomal protein uL11 family. In terms of assembly, part of the ribosomal stalk of the 50S ribosomal subunit. Interacts with L10 and the large rRNA to form the base of the stalk. L10 forms an elongated spine to which L12 dimers bind in a sequential fashion forming a multimeric L10(L12)X complex.

Forms part of the ribosomal stalk which helps the ribosome interact with GTP-bound translation factors. In Methanospirillum hungatei JF-1 (strain ATCC 27890 / DSM 864 / NBRC 100397 / JF-1), this protein is Large ribosomal subunit protein uL11.